The sequence spans 548 residues: Probable manganese-dependent inorganic pyrophosphatase (548 aa).

Residues 1 to 74 (MKALERVYVI…HIETLEPTVE (74 aa)) form a PPase part 1 region. Mn(2+) contacts are provided by His12, Asp16, and Asp18. CBS domains lie at 77-132 (ELKN…RLKI) and 254-311 (MSKK…VILV). Residues 306–548 (KKVILVDHNE…KIGEVLRRER (243 aa)) form a PPase part 2 region. Asp312, His334, and Asp386 together coordinate Mn(2+).

Belongs to the PPase class C family. Mn(2+) is required as a cofactor.

Its subcellular location is the cytoplasm. The enzyme catalyses diphosphate + H2O = 2 phosphate + H(+). The polypeptide is Probable manganese-dependent inorganic pyrophosphatase (ppaC) (Thermotoga maritima (strain ATCC 43589 / DSM 3109 / JCM 10099 / NBRC 100826 / MSB8)).